The sequence spans 502 residues: Activin receptor type-1-like (502 aa).

The first 22 residues, 1-22, serve as a signal peptide directing secretion; sequence MTLGSFRRGLLMLSVAFGLTRG. The Extracellular segment spans residues 23–119; that stretch reads DLAKPSKLVN…EEPEVDAHLP (97 aa). Asparagine 32 is a glycosylation site (N-linked (GlcNAc...) asparagine). 3 disulfide bridges follow: cysteine 33–cysteine 50, cysteine 35–cysteine 40, and cysteine 45–cysteine 68. A mediates specificity for BMP ligand region spans residues 72 to 75; the sequence is NQEL. 2 cysteine pairs are disulfide-bonded: cysteine 76–cysteine 88 and cysteine 89–cysteine 94. N-linked (GlcNAc...) asparagine glycosylation is present at asparagine 97. A helical transmembrane segment spans residues 120–140; the sequence is LILGPVLALPVLVALGALGLW. Over 141 to 502 the chain is Cytoplasmic; the sequence is RVRRRQEKQR…HNPEKPKVIH (362 aa). 3 positions are modified to phosphoserine: serine 154, serine 159, and serine 160. In terms of domain architecture, GS spans 171-200; it reads SMLGDFLDSDCTTGSGSGLPFLVQRTVARQ. The 302-residue stretch at 201–502 folds into the Protein kinase domain; that stretch reads VALVECVGKG…HNPEKPKVIH (302 aa). ATP is bound by residues 207–215 and lysine 228; that span reads VGKGRYGEV. Aspartate 329 acts as the Proton acceptor in catalysis.

The protein belongs to the protein kinase superfamily. TKL Ser/Thr protein kinase family. TGFB receptor subfamily. In terms of assembly, interacts with TSC22D1/TSC-22. Requires Mg(2+) as cofactor. Mn(2+) is required as a cofactor.

The protein localises to the cell membrane. It catalyses the reaction L-threonyl-[receptor-protein] + ATP = O-phospho-L-threonyl-[receptor-protein] + ADP + H(+). The enzyme catalyses L-seryl-[receptor-protein] + ATP = O-phospho-L-seryl-[receptor-protein] + ADP + H(+). Its function is as follows. Type I receptor for TGF-beta family ligands BMP9/GDF2 and BMP10 and important regulator of normal blood vessel development. On ligand binding, forms a receptor complex consisting of two type II and two type I transmembrane serine/threonine kinases. Type II receptors phosphorylate and activate type I receptors which autophosphorylate, then bind and activate SMAD transcriptional regulators. May bind activin as well. This is Activin receptor type-1-like (Acvrl1) from Mus musculus (Mouse).